Here is a 90-residue protein sequence, read N- to C-terminus: Auxin-responsive protein SAUR22 (90 aa).

The protein belongs to the ARG7 family.

It is found in the cell membrane. Functions as a positive effector of cell expansion through modulation of auxin transport. This Arabidopsis thaliana (Mouse-ear cress) protein is Auxin-responsive protein SAUR22.